Reading from the N-terminus, the 549-residue chain is Chaperonin GroEL 1 (549 aa).

Residues 30–33 (TLGP), Lys51, 87–91 (DGTTT), Gly415, 479–481 (NAA), and Asp495 contribute to the ATP site.

It belongs to the chaperonin (HSP60) family. As to quaternary structure, forms a cylinder of 14 subunits composed of two heptameric rings stacked back-to-back. Interacts with the co-chaperonin GroES.

It is found in the cytoplasm. The enzyme catalyses ATP + H2O + a folded polypeptide = ADP + phosphate + an unfolded polypeptide.. Together with its co-chaperonin GroES, plays an essential role in assisting protein folding. The GroEL-GroES system forms a nano-cage that allows encapsulation of the non-native substrate proteins and provides a physical environment optimized to promote and accelerate protein folding. This Azoarcus sp. (strain BH72) protein is Chaperonin GroEL 1.